Reading from the N-terminus, the 633-residue chain is Phosphomethylpyrimidine synthase (633 aa).

Residues asparagine 245, methionine 274, tyrosine 303, histidine 339, 359 to 361 (SRG), 400 to 403 (DGLR), and glutamate 439 contribute to the substrate site. Histidine 443 contributes to the Zn(2+) binding site. Tyrosine 466 serves as a coordination point for substrate. Histidine 507 contacts Zn(2+). Residues cysteine 587, cysteine 590, and cysteine 595 each coordinate [4Fe-4S] cluster.

The protein belongs to the ThiC family. Homodimer. [4Fe-4S] cluster serves as cofactor.

The enzyme catalyses 5-amino-1-(5-phospho-beta-D-ribosyl)imidazole + S-adenosyl-L-methionine = 4-amino-2-methyl-5-(phosphooxymethyl)pyrimidine + CO + 5'-deoxyadenosine + formate + L-methionine + 3 H(+). Its pathway is cofactor biosynthesis; thiamine diphosphate biosynthesis. Catalyzes the synthesis of the hydroxymethylpyrimidine phosphate (HMP-P) moiety of thiamine from aminoimidazole ribotide (AIR) in a radical S-adenosyl-L-methionine (SAM)-dependent reaction. The sequence is that of Phosphomethylpyrimidine synthase from Neisseria meningitidis serogroup B (strain ATCC BAA-335 / MC58).